Here is a 529-residue protein sequence, read N- to C-terminus: Bifunctional purine biosynthesis protein PurH (529 aa).

The region spanning 1–148 (MQPPRPVRRA…KNHKDVAIVV (148 aa)) is the MGS-like domain.

The protein belongs to the PurH family.

It catalyses the reaction (6R)-10-formyltetrahydrofolate + 5-amino-1-(5-phospho-beta-D-ribosyl)imidazole-4-carboxamide = 5-formamido-1-(5-phospho-D-ribosyl)imidazole-4-carboxamide + (6S)-5,6,7,8-tetrahydrofolate. The catalysed reaction is IMP + H2O = 5-formamido-1-(5-phospho-D-ribosyl)imidazole-4-carboxamide. It participates in purine metabolism; IMP biosynthesis via de novo pathway; 5-formamido-1-(5-phospho-D-ribosyl)imidazole-4-carboxamide from 5-amino-1-(5-phospho-D-ribosyl)imidazole-4-carboxamide (10-formyl THF route): step 1/1. Its pathway is purine metabolism; IMP biosynthesis via de novo pathway; IMP from 5-formamido-1-(5-phospho-D-ribosyl)imidazole-4-carboxamide: step 1/1. This Sodalis glossinidius (strain morsitans) protein is Bifunctional purine biosynthesis protein PurH.